The primary structure comprises 3926 residues: Protein bassoon (3926 aa).

The disordered stretch occupies residues 1–161 (MGNEVSLEGG…PTSPYSVPQI (161 aa)). Residue glycine 2 is the site of N-myristoyl glycine attachment. Pro residues-rich tracts occupy residues 15 to 30 (PLPP…PGPG) and 58 to 72 (PPVP…PGPG). Residues 23-32 (PGPGPGPGPG) form a 5 X 2 AA tandem repeats of P-G region. The interval 61–74 (PGPGPGPGPGPGPG) is 7 X 2 AA tandem repeats of P-G. 2 stretches are compositionally biased toward polar residues: residues 90–105 (RAAS…TTPG) and 130–157 (QVDS…SPYS). Serine 145 is modified (phosphoserine). Arginine 148 carries the post-translational modification Omega-N-methylarginine. 2 C4-type zinc fingers span residues 170 to 193 (CPIC…CTQC) and 198 to 220 (CNQC…CLNC). Disordered stretches follow at residues 231–343 (TTAP…EQTQ) and 366–459 (SVQP…KTMP). Polar residues predominate over residues 233–243 (APRSKSQQQLH). Phosphoserine is present on residues serine 244 and serine 248. The span at 366-377 (SVQPEADTQGQP) shows a compositional bias: polar residues. 2 consecutive C4-type zinc fingers follow at residues 465–488 (CPLC…CTTC) and 493–515 (CNLC…CLNC). Disordered regions lie at residues 524–927 (SLGE…LQGG) and 940–1248 (GSYG…AEGT). Residues 552–569 (PLKQKGPQGLGQPSGPLP) are compositionally biased toward low complexity. A run of 3 repeats spans residues 571-577 (KASPLST), 578-584 (KASPLPS), and 585-591 (KASPQAK). The segment at 571–591 (KASPLSTKASPLPSKASPQAK) is 3 X 7 AA tandem repeats of K-A-S-P-[LQ]-[APS]-[KST]. Positions 619–631 (MPKPPPETTPTPA) are enriched in pro residues. The segment covering 671–680 (QDASRSPQSL) has biased composition (polar residues). A compositionally biased stretch (low complexity) spans 681–698 (SDTGYSSDGISSSQSEIT). The segment covering 771–787 (FDSDEELEDILEEDEDS) has biased composition (acidic residues). Residues 788–797 (AEWRRRREQQ) show a composition bias toward basic and acidic residues. Over residues 851-862 (SAEEDNLEEDDT) the composition is skewed to acidic residues. An Omega-N-methylarginine modification is found at arginine 867. Residue serine 970 is modified to Phosphoserine. Residues 984–1001 (PASTPSYTSGTSPTSLSS) are compositionally biased toward low complexity. Residues 1037–1092 (IEDSSEEEELREEEELLREQEKMREVEQQRIRSTARKTRRDKEELRAQRRRERSKT) are a coiled coil. Residues 1039–1052 (DSSEEEELREEEEL) show a composition bias toward acidic residues. A phosphoserine mark is found at serine 1040 and serine 1041. Basic and acidic residues predominate over residues 1053–1066 (LREQEKMREVEQQR). Phosphoserine is present on serine 1090. Threonine 1092 carries the phosphothreonine modification. Phosphoserine occurs at positions 1098 and 1104. The span at 1107 to 1122 (EELRQAAEMEELHRSS) shows a compositional bias: basic and acidic residues. 2 stretches are compositionally biased toward low complexity: residues 1123–1133 (CSEYSPSPSLD) and 1163–1180 (SPTE…SGRP). Residues 1181–1208 (LKSAEEAYEEMMRKAELLQRQQGQAAGA) are a coiled coil. A compositionally biased stretch (basic and acidic residues) spans 1182–1197 (KSAEEAYEEMMRKAEL). Low complexity predominate over residues 1199–1209 (QRQQGQAAGAR). At serine 1226 the chain carries Phosphoserine. A coiled-coil region spans residues 1276–1294 (RDLAFAEDKKKEKQFLNAE). Disordered regions lie at residues 1298–1547 (MDPM…RLVW) and 1570–1620 (RMVH…RVPS). The segment covering 1322–1332 (SFSTPTSSDSS) has biased composition (low complexity). Threonine 1343 is a glycosylation site (O-linked (GlcNAc) threonine). A compositionally biased stretch (basic and acidic residues) spans 1346-1355 (FAKETQDPLK). 2 stretches are compositionally biased toward low complexity: residues 1358–1367 (SSPASPSSAS) and 1377–1392 (GPGT…CPAG). A glycan (O-linked (GlcNAc) threonine) is linked at threonine 1384. The segment covering 1408–1434 (RSPSPSSTAHSYGHSPTTANYGSQTED) has biased composition (polar residues). Over residues 1466–1493 (PSRAYSYFASSSPPLSPSSPSESPTFSP) the composition is skewed to low complexity. A phosphoserine mark is found at serine 1477, serine 1486, and serine 1488. Over residues 1570–1598 (RMVHASASTSPLCSPTETQPTTHGYSQTT) the composition is skewed to polar residues. Residues 1606 to 1616 (PPEPPGPPGFP) show a composition bias toward pro residues. Arginine 1787 and arginine 1791 each carry omega-N-methylarginine. Arginine 1801 is modified (asymmetric dimethylarginine; alternate). Arginine 1801 bears the Omega-N-methylarginine; alternate mark. Arginine 1813 carries the post-translational modification Omega-N-methylarginine. The disordered stretch occupies residues 1924–1978 (PEKSMADAAPPGQSSSPFYGPRDPEPPEPPTYRAQGVVGPGPHEEQRPYPQGLPG). Phosphoserine occurs at positions 1985 and 2041. Omega-N-methylarginine is present on residues arginine 2046 and arginine 2076. Asymmetric dimethylarginine occurs at positions 2250, 2260, and 2266. Residues 2287–2309 (AAKAPGAGGPSRPEMPVGAAREE) are disordered. The O-linked (GlcNAc) threonine glycan is linked to threonine 2314. The segment covering 2324–2341 (GAPAPAPLAGQKPPADAA) has biased composition (low complexity). Disordered stretches follow at residues 2324 to 2370 (GAPA…KQQE) and 2532 to 2568 (PSSA…ACEL). Positions 2351–2476 (RPGFEKEEAS…EEQKQRQKAP (126 aa)) form a coiled coil. Over residues 2353–2370 (GFEKEEASQEERQRKQQE) the composition is skewed to basic and acidic residues. Positions 2533 to 2543 (SSASDMSLQTE) are enriched in polar residues. At serine 2570 the chain carries Phosphoserine. Phosphothreonine occurs at positions 2587 and 2614. The tract at residues 2601–2655 (RRRARRSADCSVQTDDEDSAEWEQPVRRRRSRLPRHSDSGSDSKHDATASSSSAA) is disordered. Positions 2635-2647 (RHSDSGSDSKHDA) are enriched in basic and acidic residues. A glycan (O-linked (GlcNAc) threonine) is linked at threonine 2691. Residues 2721 to 3268 (EPDGQAQGVA…PGSSGRPGKE (548 aa)) form an interaction with DAO region. Residues serine 2802, serine 2851, and serine 2857 each carry the phosphoserine modification. A disordered region spans residues 2845 to 2865 (TLQRSLSDPKPLSPTAEESAK). Threonine 2936 carries O-linked (GlcNAc) threonine glycosylation. Residues 2939 to 2981 (SLLRELDRDLRLVEHESTKLRKKQAELDEEEKEIDAKLKYLEL) adopt a coiled-coil conformation. Serine 3013 is subject to Phosphoserine. The span at 3039-3055 (AAAPATPSGPTAFQQPR) shows a compositional bias: low complexity. Disordered regions lie at residues 3039–3375 (AAAP…FSPI), 3424–3551 (GMSS…PRAH), and 3572–3897 (EAYH…SVFS). The span at 3083–3095 (YPGPSTYPAPAFP) shows a compositional bias: pro residues. A compositionally biased stretch (low complexity) spans 3165–3176 (ASPVVPMSSAPS). The span at 3205-3228 (SVSQSPAPTYPSDSHYTSLEQNVP) shows a compositional bias: polar residues. Residue serine 3291 is modified to Phosphoserine. 3 stretches are compositionally biased toward basic and acidic residues: residues 3321–3333 (GDSD…RVEK), 3363–3375 (QGME…FSPI), and 3465–3477 (GYER…ERLQ). Serine 3373 is subject to Phosphoserine. Arginine 3492 is modified (omega-N-methylarginine). 4 stretches are compositionally biased toward basic and acidic residues: residues 3540–3551 (VQEHVKDGPRAH), 3583–3593 (WFDKPRDARSD), 3628–3647 (LWPH…EHRH), and 3657–3681 (HTGE…EARP). The span at 3703–3712 (AEYSQPSRAS) shows a compositional bias: polar residues. Residues 3741–3807 (PQAQPQLQGR…RLQQQSQPTT (67 aa)) are compositionally biased toward low complexity. Arginine 3808 carries the post-translational modification Omega-N-methylarginine. Composition is skewed to low complexity over residues 3849–3860 (AKAPQQGRAPQA) and 3882–3892 (GAPAGQPGADG).

As to quaternary structure, interacts with PCLO, ERC2/CAST1, RIMS1 and UNC13A. Interacts with TPRG1L. Interacts with DYNLL1 and DYNLL2; these interactions potentially link PTVs to dynein and myosin V motor complexes. Interacts with ATG5; this interaction is important for the regulation of presynaptic autophagy. Interacts (via C-terminus) with TRIO (via N-terminus). Interacts with CTBP1. Interacts with SIAH1; this interaction negatively regulates SIAH1 E3 ligase activity. Interacts (via coiled region) with DAO; the interaction is direct. Post-translationally, myristoylated. The N-terminal myristoylation is not sufficient for presynaptic localization. As to expression, exclusively expressed in brain.

Its subcellular location is the cytoplasm. The protein resides in the presynaptic active zone. It is found in the cytoskeleton. The protein localises to the cytoplasmic vesicle. It localises to the secretory vesicle. Its subcellular location is the synaptic vesicle membrane. Functionally, scaffold protein of the presynaptic cytomatrix at the active zone (CAZ) which is the place in the synapse where neurotransmitter is released. After synthesis, participates in the formation of Golgi-derived membranous organelles termed Piccolo-Bassoon transport vesicles (PTVs) that are transported along axons to sites of nascent synaptic contacts. At the presynaptic active zone, regulates the spatial organization of synaptic vesicle cluster, the protein complexes that execute membrane fusion and compensatory endocytosis. Also functions in processes other than assembly such as the regulation of specific presynaptic protein ubiquitination by interacting with SIAH1 or the regulation of presynaptic autophagy by associating with ATG5. Also mediates synapse to nucleus communication leading to reconfiguration of gene expression by associating with the transcriptional corepressor CTBP1 and by subsequently reducing the size of its pool available for nuclear import. Inhibits the activity of the proportion of DAO enzyme that localizes to the presynaptic active zone, which may modulate synaptic transmission. The sequence is that of Protein bassoon from Homo sapiens (Human).